We begin with the raw amino-acid sequence, 192 residues long: Imidazoleglycerol-phosphate dehydratase (192 aa).

Belongs to the imidazoleglycerol-phosphate dehydratase family.

It localises to the cytoplasm. The catalysed reaction is D-erythro-1-(imidazol-4-yl)glycerol 3-phosphate = 3-(imidazol-4-yl)-2-oxopropyl phosphate + H2O. It participates in amino-acid biosynthesis; L-histidine biosynthesis; L-histidine from 5-phospho-alpha-D-ribose 1-diphosphate: step 6/9. This Staphylococcus aureus (strain JH9) protein is Imidazoleglycerol-phosphate dehydratase.